A 286-amino-acid polypeptide reads, in one-letter code: Ribosomal RNA small subunit methyltransferase A (286 aa).

S-adenosyl-L-methionine-binding residues include His-11, Leu-13, Gly-44, Glu-65, Asp-90, and Asn-115.

Belongs to the class I-like SAM-binding methyltransferase superfamily. rRNA adenine N(6)-methyltransferase family. RsmA subfamily.

The protein resides in the cytoplasm. It carries out the reaction adenosine(1518)/adenosine(1519) in 16S rRNA + 4 S-adenosyl-L-methionine = N(6)-dimethyladenosine(1518)/N(6)-dimethyladenosine(1519) in 16S rRNA + 4 S-adenosyl-L-homocysteine + 4 H(+). Functionally, specifically dimethylates two adjacent adenosines (A1518 and A1519) in the loop of a conserved hairpin near the 3'-end of 16S rRNA in the 30S particle. May play a critical role in biogenesis of 30S subunits. The polypeptide is Ribosomal RNA small subunit methyltransferase A (Nostoc punctiforme (strain ATCC 29133 / PCC 73102)).